The following is a 301-amino-acid chain: Protoheme IX farnesyltransferase (301 aa).

A run of 9 helical transmembrane segments spans residues 20–42, 55–75, 105–125, 126–146, 150–172, 176–198, 227–247, 249–269, and 280–300; these read FTELVKIGIVNSNTITAFTGMWL, VDVIFFTIVGSALIVAASGAF, ALMVALVLGVVGTIMLFMTTW, QAGVLGVIGVFLYVVVYSLYA, LVSNTVIGSFSGAVPPLIGWFAV, FSMVPIMLFLVMFCWQPPHFYAI, MFFWVILLTILPFFMFDLGIV, VILATLLNIGWLALSVYGFKM, and FIYSLNYMTILFVAMVVISIF.

The protein belongs to the UbiA prenyltransferase family. Protoheme IX farnesyltransferase subfamily. As to quaternary structure, interacts with CtaA.

Its subcellular location is the cell membrane. The catalysed reaction is heme b + (2E,6E)-farnesyl diphosphate + H2O = Fe(II)-heme o + diphosphate. It functions in the pathway porphyrin-containing compound metabolism; heme O biosynthesis; heme O from protoheme: step 1/1. Its function is as follows. Converts heme B (protoheme IX) to heme O by substitution of the vinyl group on carbon 2 of heme B porphyrin ring with a hydroxyethyl farnesyl side group. This chain is Protoheme IX farnesyltransferase, found in Listeria welshimeri serovar 6b (strain ATCC 35897 / DSM 20650 / CCUG 15529 / CIP 8149 / NCTC 11857 / SLCC 5334 / V8).